Here is a 449-residue protein sequence, read N- to C-terminus: XK-related protein 2 (449 aa).

10 helical membrane-spanning segments follow: residues 35-55 (FSIL…LYMV), 68-88 (TYTF…LIFV), 98-118 (LSLF…EAMI), 174-194 (IQAF…SLIS), 202-222 (VVLM…CNML), 241-261 (LCIT…LVLF), 269-289 (AVPF…IKFW), 306-326 (VGTL…NFSC), 357-377 (LVEN…VLLN), and 382-402 (LIAL…LLFF).

The protein belongs to the XK family. As to expression, expressed predominantly in the placenta, in syncytiotrophoblasts. Moderate levels in the adrenal gland, low levels in the trachea and very low levels in the bone marrow.

The protein localises to the cell membrane. The polypeptide is XK-related protein 2 (XKRX) (Homo sapiens (Human)).